Consider the following 119-residue polypeptide: MIAGIGIDVAEIDRIKRAVEKTPSFINKVLTKGEQAQLATLKNQRYYEYIAGRFSLKEAYSKALGTGIGRHVSFLDVEIIDNELGQPVVVSHPFDGPAHASVSHTGQLVFTEVILEKGE.

Positions 8 and 58 each coordinate Mg(2+).

The protein belongs to the P-Pant transferase superfamily. AcpS family. Mg(2+) serves as cofactor.

It localises to the cytoplasm. It catalyses the reaction apo-[ACP] + CoA = holo-[ACP] + adenosine 3',5'-bisphosphate + H(+). Transfers the 4'-phosphopantetheine moiety from coenzyme A to a Ser of acyl-carrier-protein. This chain is Holo-[acyl-carrier-protein] synthase, found in Limosilactobacillus fermentum (strain NBRC 3956 / LMG 18251) (Lactobacillus fermentum).